A 166-amino-acid chain; its full sequence is UPF0304 protein VIBHAR_01542 (166 aa).

The protein belongs to the UPF0304 family.

The protein is UPF0304 protein VIBHAR_01542 of Vibrio campbellii (strain ATCC BAA-1116).